The primary structure comprises 130 residues: Small ribosomal subunit protein uS9 (130 aa).

The tract at residues 105–130 (TRDARMKERKKPGLKKARKASQFSKR) is disordered. The segment covering 111-130 (KERKKPGLKKARKASQFSKR) has biased composition (basic residues).

This sequence belongs to the universal ribosomal protein uS9 family.

This Lactiplantibacillus plantarum (strain ATCC BAA-793 / NCIMB 8826 / WCFS1) (Lactobacillus plantarum) protein is Small ribosomal subunit protein uS9.